The primary structure comprises 215 residues: Probable serine/threonine-protein kinase 2 (215 aa).

In terms of domain architecture, Protein kinase spans M1–L205.

It belongs to the protein kinase superfamily. Ser/Thr protein kinase family. In terms of assembly, interacts with the kinase domain of host EIF2AK2.

The protein localises to the host cytoplasm. The enzyme catalyses L-seryl-[protein] + ATP = O-phospho-L-seryl-[protein] + ADP + H(+). The catalysed reaction is L-threonyl-[protein] + ATP = O-phospho-L-threonyl-[protein] + ADP + H(+). Functionally, plays a role in the inhibition of host eIF2alpha/EIF2S1 phosphorylation, thereby increasing viral fitness. In the insect host, targets the endogenous insect heme-regulated inhibitor (HRI)-like eIF2alpha kinase. In Autographa californica nuclear polyhedrosis virus (AcMNPV), this protein is Probable serine/threonine-protein kinase 2 (PK2).